The chain runs to 204 residues: N-(5'-phosphoribosyl)anthranilate isomerase (204 aa).

Belongs to the TrpF family.

It catalyses the reaction N-(5-phospho-beta-D-ribosyl)anthranilate = 1-(2-carboxyphenylamino)-1-deoxy-D-ribulose 5-phosphate. The protein operates within amino-acid biosynthesis; L-tryptophan biosynthesis; L-tryptophan from chorismate: step 3/5. The sequence is that of N-(5'-phosphoribosyl)anthranilate isomerase from Bacillus cereus (strain B4264).